A 5635-amino-acid chain; its full sequence is Hemicentin-1 (5635 aa).

A signal peptide spans 1–21; sequence MISWEVVHTVFLFALLYSSLA. Positions 41-216 constitute a VWFA domain; the sequence is TLAFVFDVTG…EVLKWVEEAV (176 aa). Residues N349 and N390 are each glycosylated (N-linked (GlcNAc...) asparagine). 44 consecutive Ig-like C2-type domains span residues 431–517, 520–607, 612–697, 702–788, 793–883, 890–976, 981–1067, 1072–1166, 1171–1255, 1262–1354, 1358–1447, 1452–1541, 1546–1634, 1638–1724, 1733–1821, 1826–1914, 1919–2007, 2012–2097, 2104–2190, 2195–2285, 2290–2379, 2384–2470, 2478–2564, 2571–2662, 2666–2763, 2766–2864, 2868–2959, 2964–3051, 3056–3146, 3151–3240, 3245–3335, 3340–3429, 3434–3516, 3527–3615, 3620–3708, 3713–3797, 3804–3892, 3897–3983, 3988–4076, 4079–4164, 4169–4255, 4260–4344, 4348–4435, and 4440–4527; these read PKVT…FDVS, PPVI…VFLT, PKVT…STLR, PKLM…ITLD, PVFI…TTVT, PLIG…TSVV, PTIQ…VQLT, PRVF…VKLN, PKIQ…TEIT, PTVE…YNLK, PPVI…FNID, PTII…IKLT, PSIK…FHVD, PPMI…KEIK, PAIE…FEVT, PTIK…IQLH, PSLE…YSLQ, PSIS…RDID, PNIM…YNVN, PNIG…YNLQ, PTIT…YDLS, PSII…RKIF, PHIV…RSFS, PTIA…YEVK, PPII…VNIQ, PSFQ…YDVR, PPII…FNLN, PSVI…FSLT, PSIK…FHLN, PSIE…YFLS, PSVA…FNLN, PTIR…YNLQ, PNMD…GEVS, PHIN…YLVR, PNIA…FILT, PNIK…RRID, PSIA…VDLT, PSIA…VTLH, PVIQ…LNVQ, PVIS…TKLT, PRIR…VSLT, PTFT…GFVY, PPVF…MSLT, and PIIT…VIVQ. The cysteines at positions 451 and 499 are disulfide-linked. N-linked (GlcNAc...) asparagine glycans are attached at residues N528, N550, N573, and N620. Residues C541 and C591 are joined by a disulfide bond. An intrachain disulfide couples C633 to C681. N693 carries an N-linked (GlcNAc...) asparagine glycan. A disulfide bond links C723 and C772. N809 carries N-linked (GlcNAc...) asparagine glycosylation. Intrachain disulfides connect C814-C867 and C911-C960. N970 carries N-linked (GlcNAc...) asparagine glycosylation. 2 disulfide bridges follow: C1002–C1051 and C1101–C1150. Residue N1158 is glycosylated (N-linked (GlcNAc...) asparagine). An intrachain disulfide couples C1192 to C1241. N-linked (GlcNAc...) asparagine glycosylation occurs at N1272. Cysteines 1288 and 1338 form a disulfide. N1369 carries N-linked (GlcNAc...) asparagine glycosylation. 2 disulfides stabilise this stretch: C1382–C1431 and C1475–C1525. A glycan (N-linked (GlcNAc...) asparagine) is linked at N1552. 4 cysteine pairs are disulfide-bonded: C1569–C1618, C1663–C1712, C1756–C1805, and C1848–C1898. N-linked (GlcNAc...) asparagine glycosylation is present at N1929. Intrachain disulfides connect C1942–C1991 and C2033–C2083. N2112 and N2155 each carry an N-linked (GlcNAc...) asparagine glycan. 3 disulfides stabilise this stretch: C2125–C2174, C2218–C2269, and C2314–C2363. N2395 carries an N-linked (GlcNAc...) asparagine glycan. Intrachain disulfides connect C2408-C2457, C2501-C2550, and C2597-C2646. A glycan (N-linked (GlcNAc...) asparagine) is linked at N2689. 2 disulfides stabilise this stretch: C2696-C2745 and C2799-C2848. N2887 carries an N-linked (GlcNAc...) asparagine glycan. Residues C2894 and C2943 are joined by a disulfide bond. N-linked (GlcNAc...) asparagine glycosylation occurs at N2973. 6 disulfide bridges follow: C2986-C3035, C3081-C3130, C3173-C3224, C3268-C3319, C3364-C3413, and C3457-C3506. N-linked (GlcNAc...) asparagine glycosylation is found at N3221 and N3300. Residue N3530 is glycosylated (N-linked (GlcNAc...) asparagine). 2 disulfide bridges follow: C3550/C3599 and C3643/C3692. N-linked (GlcNAc...) asparagine glycosylation is found at N3689 and N3727. C3734 and C3783 form a disulfide bridge. N-linked (GlcNAc...) asparagine glycosylation occurs at N3812. 26 disulfides stabilise this stretch: C3825–C3876, C3918–C3967, C4009–C4058, C4100–C4148, C4190–C4239, C4281–C4328, C4371–C4419, C4461–C4509, C4541–C4578, C4545–C4583, C4556–C4568, C4598–C4635, C4602–C4640, C4613–C4625, C4655–C4692, C4659–C4697, C4670–C4682, C4712–C4749, C4716–C4754, C4727–C4739, C4769–C4806, C4773–C4811, C4784–C4796, C4826–C4863, C4830–C4868, and C4841–C4853. N-linked (GlcNAc...) asparagine glycosylation occurs at N4029. 2 N-linked (GlcNAc...) asparagine glycosylation sites follow: N4401 and N4491. TSP type-1 domains follow at residues 4529–4584, 4586–4641, 4643–4698, 4700–4755, 4757–4812, and 4814–4869; these read HGGF…KPCP, DGSW…RPCP, HGAW…RNCP, HGKW…DPCP, HGNW…DMCP, and DGSW…QACP. N-linked (GlcNAc...) asparagine glycosylation occurs at N4606. Residues 4871–5093 form the Nidogen G2 beta-barrel domain; sequence GPQRARGSVI…SKGDRSNQCP (223 aa). 2 N-linked (GlcNAc...) asparagine glycosylation sites follow: N4894 and N5040. In terms of domain architecture, EGF-like 1; calcium-binding spans 5107-5146; the sequence is DEDECAAGNPCSHSCHNAMGTYYCSCPKGLTIAADGRTCQ. Disulfide bonds link C5111/C5121, C5117/C5130, and C5132/C5145. The region spanning 5147 to 5191 is the EGF-like 2; calcium-binding domain; the sequence is DIDECALGRHTCHAGQDCDNTIGSYRCVVRCGSGFRRTSDGLSCQ. In terms of domain architecture, EGF-like 3; calcium-binding spans 5192-5229; sequence DINECQESSPCHQRCFNAIGSFHCGCEPGYQLKGRKCM. 3 cysteine pairs are disulfide-bonded: C5196–C5206, C5202–C5215, and C5217–C5228. The region spanning 5230–5271 is the EGF-like 4; calcium-binding domain; that stretch reads DVNECRQNVCRPDQHCKNTRGGYKCIDLCPNGMTKAENGTCI. N5267 carries an N-linked (GlcNAc...) asparagine glycan. Residues 5272-5307 enclose the EGF-like 5; calcium-binding domain; it reads DIDECKDGTHQCRYNQICENTRGSYRCVCPRGYRSQ. Cystine bridges form between C5276/C5289, C5283/C5298, C5319/C5330, C5326/C5339, C5341/C5354, C5436/C5446, C5442/C5455, and C5457/C5470. Residues 5315-5355 enclose the EGF-like 6; calcium-binding domain; it reads DINECEQVPKPCAHQCSNTPGSFKCICPPGQHLLGDGKSCA. The EGF-like 7; calcium-binding domain maps to 5432–5471; it reads DIDECENTDACQHECKNTFGSYQCICPPGYQLTHNGKTCQ. N-linked (GlcNAc...) asparagine glycosylation occurs at N5615.

Expressed in hair follicles and in the dermis (at protein level). As to expression, expressed in skin fibroblasts and retinal pigment epithelium (RPE) cells.

The protein localises to the secreted. It is found in the extracellular space. It localises to the extracellular matrix. Its subcellular location is the basement membrane. The protein resides in the cytoplasm. The protein localises to the cell junction. It is found in the cleavage furrow. Its function is as follows. Involved in transforming growth factor beta-mediated rearrangement of the podocyte cytoskeleton which includes reduction of F-actin fibers and broadening, flattening and elongation of podocytes. Plays a role in basement membrane organization. May promote cleavage furrow maturation during cytokinesis in preimplantation embryos. May play a role in the architecture of adhesive and flexible epithelial cell junctions. May play a role during myocardial remodeling by imparting an effect on cardiac fibroblast migration. This is Hemicentin-1 (HMCN1) from Homo sapiens (Human).